A 909-amino-acid polypeptide reads, in one-letter code: Phosphoenolpyruvate carboxylase (909 aa).

Catalysis depends on residues His151 and Lys578.

Belongs to the PEPCase type 1 family. It depends on Mg(2+) as a cofactor.

The enzyme catalyses oxaloacetate + phosphate = phosphoenolpyruvate + hydrogencarbonate. Its function is as follows. Forms oxaloacetate, a four-carbon dicarboxylic acid source for the tricarboxylic acid cycle. This is Phosphoenolpyruvate carboxylase from Caulobacter vibrioides (strain ATCC 19089 / CIP 103742 / CB 15) (Caulobacter crescentus).